Here is a 237-residue protein sequence, read N- to C-terminus: MVTHGKKYQDAIKLLDQSAAYAPAEAIDLAKKMSAAKFDETVEMHLKMGLDPKNATQQLRGVAVLPHGLGKTVRVLVFAQGEAEKAAQVAGADVYGGDELIKKIEAGFLDFDVAISTPDMMSKVGKLGKVLGRRGLMPNPKSGTVVPAEDFKKVIEEARKGRVEFKLDRSGIVHIILGKASFEGQMLLENMTSVVDAIIRSKPTGAKGQYIKSAYLATTMGPGVRLDLRAVSAMGGV.

It belongs to the universal ribosomal protein uL1 family. As to quaternary structure, part of the 50S ribosomal subunit.

Its function is as follows. Binds directly to 23S rRNA. The L1 stalk is quite mobile in the ribosome, and is involved in E site tRNA release. Protein L1 is also a translational repressor protein, it controls the translation of the L11 operon by binding to its mRNA. The protein is Large ribosomal subunit protein uL1 of Dehalococcoides mccartyi (strain ATCC BAA-2100 / JCM 16839 / KCTC 5957 / BAV1).